The following is a 902-amino-acid chain: Gamma-tubulin complex component 2 (902 aa).

Tyr83 is subject to Phosphotyrosine. The segment at Ala874–Gln902 is disordered.

This sequence belongs to the TUBGCP family. In terms of assembly, component of the gamma-tubulin ring complex (gTuRC) consisting of TUBGCP2, TUBGCP3, TUBGCP4, TUBGCP5 and TUBGCP6 and gamma-tubulin TUBG1 or TUBG2. TUBGCP2, TUBGCP3, TUBGCP4, TUBGCP5 and TUBGCP6 assemble in a 5:5:2:1:1 stoichiometry; each is associated with a gamma-tubulin, thereby arranging 14 gamma-tubulins in a helical manner. Gamma-tubulin at the first position is blocked by TUBGCP3 at the last position, allowing 13 protafilaments to grow into a microtubule. The gTuRC (via TUBGCP3 and TUBGCP6) interacts with ACTB and MZT1; the interactions form a luminal bridge that stabilizes the initial structure during complex assembly. The gTuRC (via TUBGCP2) interacts with MZT2A/MZT2B and CDK5RAP2 (via CM1 motif); the interactions play a role in gTuRC activation. Interacts with ATF5; the ATF5:PCNT:polyglutamylated tubulin (PGT) tripartite unites the mother centriole and the pericentriolar material (PCM) in the centrosome. As to expression, ubiquitously expressed.

The protein localises to the cytoplasm. Its subcellular location is the cytoskeleton. The protein resides in the microtubule organizing center. It is found in the centrosome. In terms of biological role, component of the gamma-tubulin ring complex (gTuRC) which mediates microtubule nucleation. The gTuRC regulates the minus-end nucleation of alpha-beta tubulin heterodimers that grow into microtubule protafilaments, a critical step in centrosome duplication and spindle formation. Plays a role in neuronal migration. The chain is Gamma-tubulin complex component 2 (TUBGCP2) from Homo sapiens (Human).